The primary structure comprises 152 residues: Ubiquitin-conjugating enzyme E2 W (152 aa).

M1 participates in a covalent cross-link: Peptide (Met-Gly) (interchain with G-Cter in ubiquitin). The UBC core domain occupies 4-152 (AATRRLMKEL…TRWWFHDDSV (149 aa)). The Glycyl thioester intermediate role is filled by C92.

Belongs to the ubiquitin-conjugating enzyme family.

It catalyses the reaction S-ubiquitinyl-[E1 ubiquitin-activating enzyme]-L-cysteine + [E2 ubiquitin-conjugating enzyme]-L-cysteine = [E1 ubiquitin-activating enzyme]-L-cysteine + S-ubiquitinyl-[E2 ubiquitin-conjugating enzyme]-L-cysteine.. The enzyme catalyses S-ubiquitinyl-[E1 ubiquitin-activating enzyme]-L-cysteine + [acceptor protein]-N-terminal-amino acid = [E1 ubiquitin-activating enzyme]-L-cysteine + N-terminal-ubiquitinyl-[acceptor protein].. The protein operates within protein modification; protein ubiquitination. Accepts ubiquitin from the E1 complex and catalyzes its covalent attachment to other proteins. Together with ubc-18, required for the ubiquitination of membranous organelles, and the removal of paternal mitochondria from early embryos. In Caenorhabditis elegans, this protein is Ubiquitin-conjugating enzyme E2 W.